Consider the following 330-residue polypeptide: Lysophospholipase D GDPD3 (330 aa).

Methionine 1 is a topological domain (cytoplasmic). Residues 2–22 (IPLLYFVLPTLGSYVMLSIFF) form a helical membrane-spanning segment. The Extracellular portion of the chain corresponds to 23–200 (LRRPHLLHTP…ANPEMPMAFT (178 aa)). Positions 39 to 308 (IRLAAHRGGS…DYPTALRHYL (270 aa)) constitute a GP-PDE domain. Positions 71, 73, and 86 each coordinate a divalent metal cation. A helical transmembrane segment spans residues 201-221 (IWRSFWILLLYYLGLLPFVSI). At 222–330 (PEKFFFCFLP…EALSCLSLKK (109 aa)) the chain is on the cytoplasmic side. The interval 311-330 (QEEETQPPQPEALSCLSLKK) is disordered.

It belongs to the glycerophosphoryl diester phosphodiesterase family. As to expression, highly expressed in stomach and kidney. In stomach detected in the glandular epithelium. Predominantly expressed in the stomach (at protein level).

The protein resides in the membrane. It localises to the cytoplasm. The protein localises to the perinuclear region. It is found in the endoplasmic reticulum membrane. The catalysed reaction is 1-hexadecanoyl-sn-glycero-3-phosphocholine + H2O = 1-hexadecanoyl-sn-glycero-3-phosphate + choline + H(+). It carries out the reaction 1-O-hexadecyl-sn-glycero-3-phosphocholine + H2O = 1-O-hexadecyl-sn-glycero-3-phosphate + choline + H(+). It catalyses the reaction 1-O-(1Z-octadecenyl)-sn-glycero-3-phospho-N-hexadecanoyl-ethanolamine + H2O = 1-O-(1Z-octadecenyl)-sn-glycero-3-phosphate + N-hexadecanoylethanolamine + H(+). The enzyme catalyses N-(5Z,8Z,11Z,14Z-eicosatetraenoyl)-1-(9Z-octadecenoyl)-sn-glycero-3-phosphoethanolamine + H2O = N-(5Z,8Z,11Z,14Z-eicosatetraenoyl)-ethanolamine + 1-(9Z-octadecenoyl)-sn-glycero-3-phosphate + H(+). The catalysed reaction is N,1-di-(9Z-octadecenoyl)-sn-glycero-3-phosphoethanolamine + H2O = N-(9Z-octadecenoyl) ethanolamine + 1-(9Z-octadecenoyl)-sn-glycero-3-phosphate + H(+). It carries out the reaction N-hexadecanoyl-1-(9Z-octadecenoyl)-sn-glycero-3-phosphoethanolamine + H2O = N-hexadecanoylethanolamine + 1-(9Z-octadecenoyl)-sn-glycero-3-phosphate + H(+). It catalyses the reaction 1-hexadecanoyl-sn-glycero-3-phosphocholine + H2O = sn-glycerol 3-phosphocholine + hexadecanoate + H(+). With respect to regulation, lysophospholipase D activity is stimulated by calcium. Loss of lysophospholipase D activity in presence of EDTA. Its function is as follows. Hydrolyzes lysoglycerophospholipids to produce lysophosphatidic acid (LPA) and the corresponding amines. Shows a preference for 1-O-alkyl-sn-glycero-3-phosphocholine (lyso-PAF), lysophosphatidylcholine (lyso-PC) and N-acylethanolamine lysophospholipids. Does not display glycerophosphodiester phosphodiesterase activity, since it cannot hydrolyze either glycerophosphoinositol or glycerophosphocholine. This Mus musculus (Mouse) protein is Lysophospholipase D GDPD3.